The sequence spans 60 residues: Large ribosomal subunit protein eL37 (60 aa).

Residues C19, C22, C34, and C37 each coordinate Zn(2+). The C4-type zinc finger occupies 19-37; sequence CRRCGSISYHARHKVCSAC.

This sequence belongs to the eukaryotic ribosomal protein eL37 family. The cofactor is Zn(2+).

Its function is as follows. Binds to the 23S rRNA. This is Large ribosomal subunit protein eL37 from Methanosphaerula palustris (strain ATCC BAA-1556 / DSM 19958 / E1-9c).